The chain runs to 2892 residues: Inositol 1,4,5-trisphosphate receptor itr-1 (2892 aa).

Over 1–2475 the chain is Cytoplasmic; sequence MNPSYGRVRK…YPLPEHSNSS (2475 aa). MIR domains are found at residues 192 to 246, 319 to 379, 386 to 466, and 490 to 551; these read GNVI…IEPA, QNSV…VQVV, GGTA…LGPT, and NKEV…LLPV. 357–361 lines the 1D-myo-inositol 1,4,5-trisphosphate pocket; the sequence is RMTNR. 1D-myo-inositol 1,4,5-trisphosphate is bound by residues 625–628 and 689–691; these read KLLR and YRK. A disordered region spans residues 1030 to 1056; it reads MMRGGNKENSKDLAKTPSVTAEEAGRT. Over residues 1034-1043 the composition is skewed to basic and acidic residues; it reads GNKENSKDLA. The chain crosses the membrane as a helical span at residues 2476-2496; it reads ISLGNLYSWFAVFSSFLLAHY. Residues 2497–2514 lie on the Extracellular side of the membrane; sequence LRHDKIYLHKTSLLILAS. Residues 2515–2535 traverse the membrane as a helical segment; that stretch reads LCFLLLSSIGVTLTLYIFGIL. Residues 2536-2572 lie on the Cytoplasmic side of the membrane; the sequence is QLVNKIVHVVAFVSNKGLEDRPIAEILACRNLHYLLV. A helical membrane pass occupies residues 2573–2593; it reads YLFICILGLLVHPMIYCILLF. Topologically, residues 2594-2615 are extracellular; sequence DIIFTEETLQNVIASVTRNYQS. A helical transmembrane segment spans residues 2616–2636; sequence IVWTGLLALILLYFFSILGFL. Residues 2637-2735 are Cytoplasmic-facing; it reads YFRHDFYLEV…FIWRVAYDMT (99 aa). The span at 2655 to 2666 shows a compositional bias: polar residues; that stretch reads ATISSGIPSETC. The tract at residues 2655-2685 is disordered; that stretch reads ATISSGIPSETCPSEGCPGLQPSEKDDNDDE. The chain crosses the membrane as a helical span at residues 2736–2756; sequence FFVVLIVIVLNLIFGVIIDTF. Residues 2757–2892 are Extracellular-facing; sequence GDLRAEKNEK…RAFMEQFQPR (136 aa).

This sequence belongs to the InsP3 receptor family. As to quaternary structure, interacts with myo-1, myo-2, unc-54/myo-4 and nmy-2. Also interacts with iri-1. As to expression, isoform a is expressed in the anterior cells of the pharyngeal terminal bulb, vulva, rectal epithelial cells, spicule protractor muscles of the proctodeum and male-specific neuron CP8 or CP9. Isoform d is expressed in the spermatheca, excretory cell, amphid socket cells, PDA motor neuron, spicule retractor muscles, gubernaculum retractor muscles, posterior oblique muscles, diagonal muscles and the vas deferens. Also expressed in the intestine, pharynx, pharyngeal isthmus, pharyngeal intestinal valve, somatic gonad, hypodermal cells of the vulva, uterine sheath cells, tail, head, LUA motor neuron and the embryonic epidermis (at protein level).

It is found in the endoplasmic reticulum membrane. In terms of biological role, receptor for inositol 1,4,5-trisphosphate, a second messenger that regulates intracellular calcium homeostasis. Binds in vitro to both inositol 1,4,5-trisphosphate (1,4,5-InsP3) and inositol 2,4,5-trisphosphate (2,4,5-InsP3) with high affinity and does not discriminate between the phosphate at 1 or 2 position. Can also bind inositol 1,3,4,5-tetrakisphosphate (1,3,4,5-InsP4) and inositol 4,5-bisphosphate (4,5-InsP2), but with lower affinity. Acts as a timekeeper/rhythm generator via calcium signaling, affecting the defecation cycle and pharyngeal pumping. Affects normal hermaphrodite and male fertility as a participant in intracellular signaling by acting downstream of let-23/lin-3 which regulates ovulation, spermathecal valve dilation and male mating behavior. Important for early embryonic development; controls epidermal cell migration and may also regulate filopodial protrusive activity during epithelial morphogenesis. Component of inositol trisphosphate (IP3)-mediated downstream signaling pathways that controls amphid sensory neuronal (ASH)-mediated response to nose touch and benzaldehyde but not other ASH-mediated responses. Involved in modulating lifespan, acting downstream of transcription factor atf-6. This Caenorhabditis elegans protein is Inositol 1,4,5-trisphosphate receptor itr-1.